A 320-amino-acid polypeptide reads, in one-letter code: Aspartate carbamoyltransferase catalytic subunit (320 aa).

Carbamoyl phosphate contacts are provided by R53 and T54. Residue K82 participates in L-aspartate binding. R103, H131, and Q134 together coordinate carbamoyl phosphate. Residues R164 and R227 each contribute to the L-aspartate site. Carbamoyl phosphate-binding residues include L266 and P267.

This sequence belongs to the aspartate/ornithine carbamoyltransferase superfamily. ATCase family. In terms of assembly, heterododecamer (2C3:3R2) of six catalytic PyrB chains organized as two trimers (C3), and six regulatory PyrI chains organized as three dimers (R2).

The catalysed reaction is carbamoyl phosphate + L-aspartate = N-carbamoyl-L-aspartate + phosphate + H(+). Its pathway is pyrimidine metabolism; UMP biosynthesis via de novo pathway; (S)-dihydroorotate from bicarbonate: step 2/3. Its function is as follows. Catalyzes the condensation of carbamoyl phosphate and aspartate to form carbamoyl aspartate and inorganic phosphate, the committed step in the de novo pyrimidine nucleotide biosynthesis pathway. This chain is Aspartate carbamoyltransferase catalytic subunit, found in Bifidobacterium adolescentis (strain ATCC 15703 / DSM 20083 / NCTC 11814 / E194a).